Reading from the N-terminus, the 279-residue chain is Ribonuclease Z (279 aa).

7 residues coordinate Zn(2+): His-64, His-66, Asp-68, His-69, His-134, Asp-191, and His-245. Asp-68 functions as the Proton acceptor in the catalytic mechanism.

This sequence belongs to the RNase Z family. Homodimer. It depends on Zn(2+) as a cofactor.

It carries out the reaction Endonucleolytic cleavage of RNA, removing extra 3' nucleotides from tRNA precursor, generating 3' termini of tRNAs. A 3'-hydroxy group is left at the tRNA terminus and a 5'-phosphoryl group is left at the trailer molecule.. Zinc phosphodiesterase, which displays some tRNA 3'-processing endonuclease activity. Probably involved in tRNA maturation, by removing a 3'-trailer from precursor tRNA. The polypeptide is Ribonuclease Z (Methanopyrus kandleri (strain AV19 / DSM 6324 / JCM 9639 / NBRC 100938)).